The chain runs to 859 residues: Bifunctional uridylyltransferase/uridylyl-removing enzyme (859 aa).

A uridylyltransferase region spans residues 1 to 325; sequence MSAHAAPSPE…PATSGITRVL (325 aa). The tract at residues 326-682 is uridylyl-removing; sequence SHDRFVEKQG…ARPSPIGDAL (357 aa). The 123-residue stretch at 444 to 566 folds into the HD domain; the sequence is VDQHILMVLR…VGNERYLTAL (123 aa). 2 consecutive ACT domains span residues 683 to 762 and 791 to 859; these read QVLV…PEPS and ILSV…AIAV.

The protein belongs to the GlnD family. It depends on Mg(2+) as a cofactor.

The enzyme catalyses [protein-PII]-L-tyrosine + UTP = [protein-PII]-uridylyl-L-tyrosine + diphosphate. It catalyses the reaction [protein-PII]-uridylyl-L-tyrosine + H2O = [protein-PII]-L-tyrosine + UMP + H(+). Its activity is regulated as follows. Uridylyltransferase (UTase) activity is inhibited by glutamine, while glutamine activates uridylyl-removing (UR) activity. In terms of biological role, modifies, by uridylylation and deuridylylation, the PII regulatory proteins (GlnB and homologs), in response to the nitrogen status of the cell that GlnD senses through the glutamine level. Under low glutamine levels, catalyzes the conversion of the PII proteins and UTP to PII-UMP and PPi, while under higher glutamine levels, GlnD hydrolyzes PII-UMP to PII and UMP (deuridylylation). Thus, controls uridylylation state and activity of the PII proteins, and plays an important role in the regulation of nitrogen fixation and metabolism. The protein is Bifunctional uridylyltransferase/uridylyl-removing enzyme of Burkholderia vietnamiensis (strain G4 / LMG 22486) (Burkholderia cepacia (strain R1808)).